The primary structure comprises 190 residues: Ribosome maturation factor RimM (190 aa).

The region spanning 102-190 (EDEYYWIDLV…RIDSDWPLED (89 aa)) is the PRC barrel domain.

The protein belongs to the RimM family. Binds ribosomal protein uS19.

It is found in the cytoplasm. An accessory protein needed during the final step in the assembly of 30S ribosomal subunit, possibly for assembly of the head region. Essential for efficient processing of 16S rRNA. May be needed both before and after RbfA during the maturation of 16S rRNA. It has affinity for free ribosomal 30S subunits but not for 70S ribosomes. This is Ribosome maturation factor RimM from Bordetella avium (strain 197N).